A 348-amino-acid polypeptide reads, in one-letter code: Doublesex- and mab-3-related transcription factor dmd-10 (348 aa).

DNA-binding regions (DM) lie at residues 43 to 91 (CQRC…YNQF) and 119 to 166 (CQKC…KIRR). The tract at residues 316–348 (SMSMSSSPSKDDESGDEDSDGLNSNSIIDVITV) is disordered.

The protein belongs to the DMRT family. In terms of tissue distribution, dimorphically expressed in the dimorphically connected interneuron AVG; expression is observed in the AVG in males, but not in hermaphrodites.

It is found in the nucleus. In terms of biological role, transcription factor. Plays a role in neuronal signaling in polymodal sensory neuron ASH, downstream of sensory receptor activation. Required for maintenance of AVG synapses. The sequence is that of Doublesex- and mab-3-related transcription factor dmd-10 from Caenorhabditis elegans.